The sequence spans 156 residues: Small ribosomal subunit protein uS7 (156 aa).

Belongs to the universal ribosomal protein uS7 family. In terms of assembly, part of the 30S ribosomal subunit. Contacts proteins S9 and S11.

Functionally, one of the primary rRNA binding proteins, it binds directly to 16S rRNA where it nucleates assembly of the head domain of the 30S subunit. Is located at the subunit interface close to the decoding center, probably blocks exit of the E-site tRNA. This chain is Small ribosomal subunit protein uS7, found in Shewanella piezotolerans (strain WP3 / JCM 13877).